The primary structure comprises 608 residues: Glutamine--fructose-6-phosphate aminotransferase [isomerizing] (608 aa).

C2 acts as the Nucleophile; for GATase activity in catalysis. Residues 2–217 (CGIVGIVGHK…DGDWAVVGKT (216 aa)) form the Glutamine amidotransferase type-2 domain. 2 consecutive SIS domains span residues 283-422 (TDID…ARGT) and 456-598 (LSRE…VDQP). K603 acts as the For Fru-6P isomerization activity in catalysis.

It is found in the cytoplasm. The enzyme catalyses D-fructose 6-phosphate + L-glutamine = D-glucosamine 6-phosphate + L-glutamate. Functionally, involved in the production of the root hair deformation (HAD) factor specifically on medicago. The polypeptide is Glutamine--fructose-6-phosphate aminotransferase [isomerizing] (nodM) (Rhizobium leguminosarum bv. viciae).